The chain runs to 828 residues: Periplasmic nitrate reductase (828 aa).

The tat-type signal signal peptide spans 1–31 (MKLSRRGFMKANAVAAAAAAAGLSVPGVARA). In terms of domain architecture, 4Fe-4S Mo/W bis-MGD-type spans 39 to 95 (IKWDKAPCRFCGTGCGVLVGTQQGRVVACQGDPDAPVNRGLNCIKGYFLPKIMYGED). [4Fe-4S] cluster is bound by residues Cys-46, Cys-49, Cys-53, and Cys-81. Residues Lys-83, Gln-150, Asn-175, Cys-179, 212-219 (WGANMAEM), 243-247 (STYQH), 262-264 (QSD), Met-372, Gln-376, Asn-482, 508-509 (SD), Lys-531, Asp-558, and 718-727 (TGRVLEHWHT) contribute to the Mo-bis(molybdopterin guanine dinucleotide) site. Residue Phe-794 coordinates substrate. Asn-802 and Lys-819 together coordinate Mo-bis(molybdopterin guanine dinucleotide).

This sequence belongs to the prokaryotic molybdopterin-containing oxidoreductase family. NasA/NapA/NarB subfamily. As to quaternary structure, component of the periplasmic nitrate reductase NapAB complex composed of NapA and NapB. The cofactor is [4Fe-4S] cluster. Requires Mo-bis(molybdopterin guanine dinucleotide) as cofactor. In terms of processing, predicted to be exported by the Tat system. The position of the signal peptide cleavage has not been experimentally proven.

It localises to the periplasm. The enzyme catalyses 2 Fe(II)-[cytochrome] + nitrate + 2 H(+) = 2 Fe(III)-[cytochrome] + nitrite + H2O. Functionally, catalytic subunit of the periplasmic nitrate reductase complex NapAB. Receives electrons from NapB and catalyzes the reduction of nitrate to nitrite. This is Periplasmic nitrate reductase from Shigella dysenteriae serotype 1 (strain Sd197).